Consider the following 217-residue polypeptide: Probable transaldolase (217 aa).

Lysine 83 acts as the Schiff-base intermediate with substrate in catalysis.

It belongs to the transaldolase family. Type 3B subfamily.

It localises to the cytoplasm. It carries out the reaction D-sedoheptulose 7-phosphate + D-glyceraldehyde 3-phosphate = D-erythrose 4-phosphate + beta-D-fructose 6-phosphate. Its pathway is carbohydrate degradation; pentose phosphate pathway; D-glyceraldehyde 3-phosphate and beta-D-fructose 6-phosphate from D-ribose 5-phosphate and D-xylulose 5-phosphate (non-oxidative stage): step 2/3. In terms of biological role, transaldolase is important for the balance of metabolites in the pentose-phosphate pathway. This Dinoroseobacter shibae (strain DSM 16493 / NCIMB 14021 / DFL 12) protein is Probable transaldolase.